We begin with the raw amino-acid sequence, 293 residues long: uncharacterized protein (293 aa).

This sequence belongs to the TolB family.

This is an uncharacterized protein from Agrobacterium fabrum (strain C58 / ATCC 33970) (Agrobacterium tumefaciens (strain C58)).